A 289-amino-acid polypeptide reads, in one-letter code: MKIAVYGKGGIGKSTTSCNISIALARRGKKVLQIGCDPKHDSTFTLTGFLIPTIIDTLQSKDYHYEDVWPEDVIYKGYGRCDCVEAGGPPAGAGCGGYVVGETVKLLKELNAFYEYDIILFDVLGDVVCGGFAAPLNYADYCIIITDNGFDALFAANRIAASVREKARTHPLRLAGLVGNRTSKRDLIDKYVEACPMPVLEVLPLIEDIRVSRVKGKTLFEMVELQPSLKYVCDFYLNIADQILSKPEGIIPKEVPDRELFSLLSDFYLNPVNTVNEKNKPNLIDFMII.

Residues 10 to 15 and lysine 39 each bind ATP; that span reads GIGKST. Residue serine 14 coordinates Mg(2+). [4Fe-4S] cluster-binding residues include cysteine 95 and cysteine 129. 180 to 181 contacts ATP; the sequence is NR.

It belongs to the NifH/BchL/ChlL family. As to quaternary structure, homodimer. Protochlorophyllide reductase is composed of three subunits; ChlL, ChlN and ChlB. Requires [4Fe-4S] cluster as cofactor.

Its subcellular location is the plastid. The protein localises to the chloroplast. It catalyses the reaction chlorophyllide a + oxidized 2[4Fe-4S]-[ferredoxin] + 2 ADP + 2 phosphate = protochlorophyllide a + reduced 2[4Fe-4S]-[ferredoxin] + 2 ATP + 2 H2O. It functions in the pathway porphyrin-containing compound metabolism; chlorophyll biosynthesis (light-independent). Functionally, component of the dark-operative protochlorophyllide reductase (DPOR) that uses Mg-ATP and reduced ferredoxin to reduce ring D of protochlorophyllide (Pchlide) to form chlorophyllide a (Chlide). This reaction is light-independent. The L component serves as a unique electron donor to the NB-component of the complex, and binds Mg-ATP. The chain is Light-independent protochlorophyllide reductase iron-sulfur ATP-binding protein from Marchantia polymorpha (Common liverwort).